A 433-amino-acid chain; its full sequence is 2,2-dialkylglycine decarboxylase (433 aa).

Lysine 272 carries the post-translational modification N6-(pyridoxal phosphate)lysine.

Belongs to the class-III pyridoxal-phosphate-dependent aminotransferase family. As to quaternary structure, homotetramer. It depends on pyridoxal 5'-phosphate as a cofactor.

The catalysed reaction is 2,2-dialkylglycine + pyruvate + H(+) = dialkyl ketone + L-alanine + CO2. Functionally, the dialkylglycine decarboxylase is of interest because it normally catalyzes both decarboxylation and amino transfer. It may be more properly described as a decarboxylating aminotransferase rather than an aminotransferring decarboxylase. In Burkholderia cepacia (Pseudomonas cepacia), this protein is 2,2-dialkylglycine decarboxylase (dgdA).